The primary structure comprises 182 residues: MFRTLTVVPLLALGLSLSACADLGQPTVRADLLDQTGKVTGTATFSPSPIGTRVSIEVSGLKAGPHGLHIHENPNCNPGPDAQGQTIPFGAAGGHFDPGASHNHDGPHARNDQGHGGDLPMITVGEDGKGRLNFDTNRLKMTGPTGVLGRSIVIHADADDYQTNPAGNSGGRERCGVFQAIN.

The first 19 residues, 1 to 19 (MFRTLTVVPLLALGLSLSA), serve as a signal peptide directing secretion. Residue Cys20 is the site of N-palmitoyl cysteine attachment. The S-diacylglycerol cysteine moiety is linked to residue Cys20. Residues His69, His71, and His95 each contribute to the Cu cation site. Cys76 and Cys175 are disulfide-bonded. The segment at 91–118 (AAGGHFDPGASHNHDGPHARNDQGHGGD) is disordered. Zn(2+) contacts are provided by His95, His104, His115, and Asp118. The segment covering 102–115 (HNHDGPHARNDQGH) has biased composition (basic and acidic residues).

The protein belongs to the Cu-Zn superoxide dismutase family. The cofactor is Cu cation. Zn(2+) serves as cofactor.

Its subcellular location is the cell membrane. The enzyme catalyses 2 superoxide + 2 H(+) = H2O2 + O2. In terms of biological role, destroys radicals which are normally produced within the cells and which are toxic to biological systems. The chain is Superoxide dismutase [Cu-Zn] (sodC) from Deinococcus radiodurans (strain ATCC 13939 / DSM 20539 / JCM 16871 / CCUG 27074 / LMG 4051 / NBRC 15346 / NCIMB 9279 / VKM B-1422 / R1).